Here is a 107-residue protein sequence, read N- to C-terminus: Death-associated protein-like 1 (107 aa).

Positions 1–26 are disordered; sequence MANEVQVQLSPLKGGHPPAVKAGGKR.

As to expression, detected in the corneal epithelium, and only in trace amounts in the liver, bladder, brain, heart, and stomach.

Functionally, may play a role in the early stages of epithelial differentiation or in apoptosis. This is Death-associated protein-like 1 (DAPL1) from Bos taurus (Bovine).